Here is a 305-residue protein sequence, read N- to C-terminus: NADH-cytochrome b5 reductase 1 (305 aa).

Residues 8–28 traverse the membrane as a helical segment; the sequence is VLLASLGVGLVTLLGLAVGSY. Positions 44 to 156 constitute an FAD-binding FR-type domain; it reads NEKYLLRLLD…RGPSGLLTYT (113 aa). FAD-binding positions include 136 to 166 and 175 to 210; these read DSLK…IQPN and VAKK…QCFL.

Belongs to the flavoprotein pyridine nucleotide cytochrome reductase family. Requires FAD as cofactor. As to expression, widely expressed.

It localises to the membrane. The catalysed reaction is 2 Fe(III)-[cytochrome b5] + NADH = 2 Fe(II)-[cytochrome b5] + NAD(+) + H(+). In terms of biological role, NADH-cytochrome b5 reductases are involved in desaturation and elongation of fatty acids, cholesterol biosynthesis, drug metabolism, and, in erythrocyte, methemoglobin reduction. This chain is NADH-cytochrome b5 reductase 1 (CYB5R1), found in Homo sapiens (Human).